The following is a 277-amino-acid chain: 2,3,4,5-tetrahydropyridine-2,6-dicarboxylate N-succinyltransferase (277 aa).

Residues Arg-106 and Asp-143 each contribute to the substrate site.

The protein belongs to the transferase hexapeptide repeat family. In terms of assembly, homotrimer.

It is found in the cytoplasm. It carries out the reaction (S)-2,3,4,5-tetrahydrodipicolinate + succinyl-CoA + H2O = (S)-2-succinylamino-6-oxoheptanedioate + CoA. Its pathway is amino-acid biosynthesis; L-lysine biosynthesis via DAP pathway; LL-2,6-diaminopimelate from (S)-tetrahydrodipicolinate (succinylase route): step 1/3. The sequence is that of 2,3,4,5-tetrahydropyridine-2,6-dicarboxylate N-succinyltransferase from Variovorax paradoxus (strain S110).